Reading from the N-terminus, the 217-residue chain is uncharacterized protein (217 aa).

The region spanning 2–216 (LCVKNVSLRL…AQWSENYNKL (215 aa)) is the ABC transporter domain. Residue 34–41 (GPSGCGKS) coordinates ATP.

Belongs to the ABC transporter superfamily.

Its function is as follows. Probably part of a binding-protein-dependent transport system YnjCD. Probably responsible for energy coupling to the transport system. This is an uncharacterized protein from Escherichia coli (strain K12).